Reading from the N-terminus, the 454-residue chain is tRNA modification GTPase MnmE (454 aa).

Residues Arg-23, Glu-80, and Lys-120 each contribute to the (6S)-5-formyl-5,6,7,8-tetrahydrofolate site. A TrmE-type G domain is found at 216–377 (GMKVVIAGRP…LRDHLKQSMG (162 aa)). A K(+)-binding site is contributed by Asn-226. Residues 226–231 (NAGKSS), 245–251 (TDIAGTT), 270–273 (DTAG), 335–338 (NKAD), and 358–360 (SAR) each bind GTP. Ser-230 lines the Mg(2+) pocket. K(+)-binding residues include Thr-245, Ile-247, and Thr-250. Thr-251 contacts Mg(2+). (6S)-5-formyl-5,6,7,8-tetrahydrofolate is bound at residue Lys-454.

Belongs to the TRAFAC class TrmE-Era-EngA-EngB-Septin-like GTPase superfamily. TrmE GTPase family. In terms of assembly, homodimer. Heterotetramer of two MnmE and two MnmG subunits. K(+) is required as a cofactor.

It localises to the cytoplasm. Functionally, exhibits a very high intrinsic GTPase hydrolysis rate. Involved in the addition of a carboxymethylaminomethyl (cmnm) group at the wobble position (U34) of certain tRNAs, forming tRNA-cmnm(5)s(2)U34. The protein is tRNA modification GTPase MnmE of Yersinia pseudotuberculosis serotype IB (strain PB1/+).